A 275-amino-acid polypeptide reads, in one-letter code: Undecaprenyl-diphosphatase (275 aa).

The next 8 helical transmembrane spans lie at 2 to 22, 43 to 63, 83 to 103, 111 to 131, 147 to 167, 186 to 206, 221 to 241, and 255 to 275; these read LDIF…FLPI, FTDM…VVLY, WVLW…GLPL, LMNW…FIVI, TLPY…LIPG, YVAT…ASLL, LQGA…YLSI, and AFGW…TLIH.

Belongs to the UppP family.

The protein resides in the cell membrane. The enzyme catalyses di-trans,octa-cis-undecaprenyl diphosphate + H2O = di-trans,octa-cis-undecaprenyl phosphate + phosphate + H(+). Catalyzes the dephosphorylation of undecaprenyl diphosphate (UPP). Confers resistance to bacitracin. This is Undecaprenyl-diphosphatase from Lactiplantibacillus plantarum (strain ATCC BAA-793 / NCIMB 8826 / WCFS1) (Lactobacillus plantarum).